The primary structure comprises 589 residues: ATP-dependent lipid A-core flippase (589 aa).

Transmembrane regions (helical) follow at residues 37-57 (ALAI…PALL), 72-92 (LWLV…SGFL), 151-171 (IMKL…LVYL), 173-193 (WKLM…IQVL), 260-280 (SAIT…IALL), and 286-306 (TTTV…IAPV). The ABC transmembrane type-1 domain occupies 37–318 (ALAIGATIVA…LSDAATPVTR (282 aa)). Residues 350–584 (IEFADVSVIY…NGAYAHLYRL (235 aa)) enclose the ABC transporter domain. ATP is bound at residue 384-391 (GASGSGKT).

Belongs to the ABC transporter superfamily. Lipid exporter (TC 3.A.1.106) family. In terms of assembly, homodimer.

It localises to the cell inner membrane. It catalyses the reaction ATP + H2O + lipid A-core oligosaccharideSide 1 = ADP + phosphate + lipid A-core oligosaccharideSide 2.. Its function is as follows. Involved in lipopolysaccharide (LPS) biosynthesis. Translocates lipid A-core from the inner to the outer leaflet of the inner membrane. Transmembrane domains (TMD) form a pore in the inner membrane and the ATP-binding domain (NBD) is responsible for energy generation. This Polaromonas sp. (strain JS666 / ATCC BAA-500) protein is ATP-dependent lipid A-core flippase.